A 328-amino-acid chain; its full sequence is UPF0421 protein SAR1980 (328 aa).

4 helical membrane-spanning segments follow: residues Ile-19–Ile-39, Leu-61–Gln-81, Val-108–Phe-128, and Thr-132–Pro-152.

This sequence belongs to the UPF0421 family.

The protein resides in the cell membrane. The chain is UPF0421 protein SAR1980 from Staphylococcus aureus (strain MRSA252).